The following is a 266-amino-acid chain: Glucosamine-6-phosphate deaminase (266 aa).

Asp72 acts as the Proton acceptor; for enolization step in catalysis. Catalysis depends on Asp141, which acts as the For ring-opening step. His143 serves as the catalytic Proton acceptor; for ring-opening step. Glu148 (for ring-opening step) is an active-site residue.

The protein belongs to the glucosamine/galactosamine-6-phosphate isomerase family. NagB subfamily. In terms of assembly, homohexamer.

The catalysed reaction is alpha-D-glucosamine 6-phosphate + H2O = beta-D-fructose 6-phosphate + NH4(+). Its pathway is amino-sugar metabolism; N-acetylneuraminate degradation; D-fructose 6-phosphate from N-acetylneuraminate: step 5/5. With respect to regulation, allosterically activated by N-acetylglucosamine 6-phosphate (GlcNAc6P). Catalyzes the reversible isomerization-deamination of glucosamine 6-phosphate (GlcN6P) to form fructose 6-phosphate (Fru6P) and ammonium ion. This Pectobacterium atrosepticum (strain SCRI 1043 / ATCC BAA-672) (Erwinia carotovora subsp. atroseptica) protein is Glucosamine-6-phosphate deaminase.